The following is a 62-amino-acid chain: Small acidic protein 1 (62 aa).

Interacts with the COP9 signalosome. Expressed in roots, flowers, siliques, stems, leaves and seeds. In flowers, detected in petals, anthers and pistils.

Functionally, mediates responses to the synthetic auxin 2,4-dichlorophenoxyacetic acid (2,4-D). Not involved in the response to indole-3-acetic acid (IAA). Interacts with RUB modification-related components and may regulate the cullin-ring ubiquitin E3 ligase complex (CRL) activity. In Arabidopsis thaliana (Mouse-ear cress), this protein is Small acidic protein 1 (SMAP1).